The sequence spans 206 residues: Nucleoside triphosphate pyrophosphatase (206 aa).

Catalysis depends on Asp71, which acts as the Proton acceptor.

This sequence belongs to the Maf family. Requires a divalent metal cation as cofactor.

Its subcellular location is the cytoplasm. It carries out the reaction a ribonucleoside 5'-triphosphate + H2O = a ribonucleoside 5'-phosphate + diphosphate + H(+). The catalysed reaction is a 2'-deoxyribonucleoside 5'-triphosphate + H2O = a 2'-deoxyribonucleoside 5'-phosphate + diphosphate + H(+). Nucleoside triphosphate pyrophosphatase. May have a dual role in cell division arrest and in preventing the incorporation of modified nucleotides into cellular nucleic acids. The chain is Nucleoside triphosphate pyrophosphatase from Rippkaea orientalis (strain PCC 8801 / RF-1) (Cyanothece sp. (strain PCC 8801)).